The primary structure comprises 889 residues: Cytoplasmic aconitate hydratase (889 aa).

Residues Gln86 and 205–207 (DSH) each bind substrate. Residues Cys437, Cys503, and Cys506 each coordinate [4Fe-4S] cluster. Substrate-binding positions include Arg536, Arg541, Arg699, and 779–780 (SR).

The protein belongs to the aconitase/IPM isomerase family. [4Fe-4S] cluster serves as cofactor.

It localises to the cytoplasm. The protein resides in the cytosol. The enzyme catalyses citrate = D-threo-isocitrate. Bifunctional iron sensor that switches between 2 activities depending on iron availability. Iron deprivation, promotes its mRNA binding activity through which it regulates the expression of genes involved in iron uptake, sequestration and utilization. Binds to iron-responsive elements (IRES) in the untranslated region of target mRNAs preventing for instance the translation of ferritin and aminolevulinic acid synthase and stabilizing the transferrin receptor mRNA. Functionally, conversely, when cellular iron levels are high, binds a 4Fe-4S cluster which precludes RNA binding activity and promotes the aconitase activity, the isomerization of citrate to isocitrate via cis-aconitate. The chain is Cytoplasmic aconitate hydratase (ACO1) from Gallus gallus (Chicken).